Consider the following 159-residue polypeptide: Putative 4-hydroxy-4-methyl-2-oxoglutarate aldolase (159 aa).

Substrate contacts are provided by residues 74-77 (GDNL) and Arg96. A divalent metal cation is bound at residue Asp97.

The protein belongs to the class II aldolase/RraA-like family. In terms of assembly, homotrimer. A divalent metal cation serves as cofactor.

The enzyme catalyses 4-hydroxy-4-methyl-2-oxoglutarate = 2 pyruvate. The catalysed reaction is oxaloacetate + H(+) = pyruvate + CO2. In terms of biological role, catalyzes the aldol cleavage of 4-hydroxy-4-methyl-2-oxoglutarate (HMG) into 2 molecules of pyruvate. Also contains a secondary oxaloacetate (OAA) decarboxylase activity due to the common pyruvate enolate transition state formed following C-C bond cleavage in the retro-aldol and decarboxylation reactions. This chain is Putative 4-hydroxy-4-methyl-2-oxoglutarate aldolase, found in Bacillus cereus (strain ZK / E33L).